We begin with the raw amino-acid sequence, 625 residues long: Clathrin interactor 1 (625 aa).

The ENTH domain occupies 16-149 (NVVMNYSEIE…QDDDRLREER (134 aa)). Position 29 (R29) interacts with a 1,2-diacyl-sn-glycero-3-phospho-(1D-myo-inositol-4,5-bisphosphate). The tract at residues 52-54 (FMY) is interaction with VTI1B. R67 lines the a 1,2-diacyl-sn-glycero-3-phospho-(1D-myo-inositol-4,5-bisphosphate) pocket. 2 interaction with VTI1B regions span residues 94–96 (SER) and 142–153 (DDRLREERKKAK). Phosphoserine is present on residues S163, S166, S173, S205, S210, S227, S245, and S299. Residues 219 to 331 (FRRKDREDSP…SSGDLVDLFD (113 aa)) are disordered. Over residues 222-239 (KDREDSPERCSDSDEEKK) the composition is skewed to basic and acidic residues. A Phosphothreonine modification is found at T308. Residues 308 to 323 (TPQSSVKTSVPSSKSS) show a composition bias toward low complexity. S312 is modified (phosphoserine). The interval 340–352 (SADLFGGFADFGS) is interaction with AP1G1, AP1G2 and GGA2. Residues 368 to 380 (GNGDFGDWSAFNQ) are interaction with AP1G1 and AP1G2. The residue at position 624 (S624) is a Phosphoserine.

Belongs to the epsin family. In terms of assembly, binds clathrin heavy chain and AP-2. Interacts with VTI1B. Interacts with GGA2 (via GAE domain). Interacts with AP1G1 (via GAE domain). Interacts with AP1G2 (via GAE domain). As to expression, ubiquitously expressed at low to intermediate levels.

It localises to the cytoplasm. The protein localises to the perinuclear region. It is found in the membrane. Its subcellular location is the cytoplasmic vesicle. The protein resides in the clathrin-coated vesicle. Its function is as follows. Binds to membranes enriched in phosphatidylinositol 4,5-bisphosphate (PtdIns(4,5)P2). May have a role in transport via clathrin-coated vesicles from the trans-Golgi network to endosomes. Stimulates clathrin assembly. The protein is Clathrin interactor 1 (CLINT1) of Homo sapiens (Human).